We begin with the raw amino-acid sequence, 173 residues long: Probable calcium-binding protein CML14 (173 aa).

4 consecutive EF-hand domains span residues 21-56 (SQLKQLRELFRRFDMNGDGSLTQLELAALLRSLGLR), 57-92 (PTGDEVHALLAGMDANGNGSVEFDELAAAIAPVLTT), 97-132 (VDQAQLLEVFRAFDRDGNGFISAAELARSMARLGQP), and 133-168 (LTFEELTRMMRDADTDGDGVISFKEFAAVMAKSALD). Residues aspartate 34, asparagine 36, aspartate 38, serine 40, glutamate 45, aspartate 70, asparagine 72, asparagine 74, serine 76, glutamate 81, aspartate 110, aspartate 112, asparagine 114, glutamate 121, aspartate 146, aspartate 148, aspartate 150, and glutamate 157 each contribute to the Ca(2+) site.

Its function is as follows. Potential calcium sensor. The protein is Probable calcium-binding protein CML14 (CML14) of Oryza sativa subsp. japonica (Rice).